A 715-amino-acid chain; its full sequence is Polyribonucleotide nucleotidyltransferase (715 aa).

Mg(2+) contacts are provided by aspartate 498 and aspartate 504. The 61-residue stretch at 565 to 625 folds into the KH domain; that stretch reads PKVCMMQIKP…ETVKKTVAFI (61 aa). One can recognise an S1 motif domain in the interval 635-709; the sequence is GTCYQASILR…RIDFLLLPKK (75 aa).

The protein belongs to the polyribonucleotide nucleotidyltransferase family. Mg(2+) serves as cofactor.

The protein localises to the cytoplasm. It catalyses the reaction RNA(n+1) + phosphate = RNA(n) + a ribonucleoside 5'-diphosphate. Its function is as follows. Involved in mRNA degradation. Catalyzes the phosphorolysis of single-stranded polyribonucleotides processively in the 3'- to 5'-direction. This Aster yellows witches'-broom phytoplasma (strain AYWB) protein is Polyribonucleotide nucleotidyltransferase.